The chain runs to 337 residues: Na(+)/H(+) exchange regulatory cofactor NHE-RF2 (337 aa).

Positions 11–91 (LCRLVRGEQG…QTQLLVVDKE (81 aa)) constitute a PDZ 1 domain. Positions 112-145 (LPPAHNPWEPKPDWACSGSLGSDTGQKDVNGPPR) are disordered. Residues Ser-130, Ser-183, Ser-186, Ser-254, Ser-269, Ser-280, and Ser-303 each carry the phosphoserine modification. The PDZ 2 domain maps to 151 to 231 (LCHLRRGPQG…EARLLVVDPE (81 aa)). The tract at residues 242–337 (VPTEEHVEGP…NRKREIFSNF (96 aa)) is disordered. Over residues 255–275 (PVTNGTSPAQLNGGSVCSSRS) the composition is skewed to polar residues. Residues 327-337 (WNRKREIFSNF) are compositionally biased toward basic and acidic residues.

As to quaternary structure, homodimer, and heterodimer with NHERF1. Binds PDZK1. Interacts with SRY. Binds ADRB2, SLC9A3, P2RY1, P2YR2, RDX and LPAR2. Interacts with MCC. Found in a complex with EZR, PODXL and NHERF2. Interacts (via the PDZ domains) with PODXL (via the C-terminal PDZ-binding motif DTHL); interaction is detected in glomerular epithelium cells. Interacts with SGK1 and KCNJ1/ROMK1. Interacts (via the PDZ domains) with SLC26A6.

It is found in the endomembrane system. Its subcellular location is the nucleus. The protein resides in the apical cell membrane. In terms of biological role, scaffold protein that connects plasma membrane proteins with members of the ezrin/moesin/radixin family and thereby helps to link them to the actin cytoskeleton and to regulate their surface expression. Necessary for cAMP-mediated phosphorylation and inhibition of SLC9A3. May also act as scaffold protein in the nucleus. The protein is Na(+)/H(+) exchange regulatory cofactor NHE-RF2 (Nherf2) of Mus musculus (Mouse).